The sequence spans 111 residues: MFSTIALFWALCLVCIINMMRYFSSLRALLSILRQSDPLLYQSVDGNGFFTTHGQLNKQIRLVNYINSQRYLDHHDPEVVLRCERLRKQFILTSSLSGLVVICLISMLIWY.

2 consecutive transmembrane segments (helical) span residues 1-21 (MFST…NMMR) and 90-110 (FILT…MLIW).

The protein belongs to the universal stress protein B family.

It localises to the cell inner membrane. This chain is Universal stress protein B, found in Photorhabdus laumondii subsp. laumondii (strain DSM 15139 / CIP 105565 / TT01) (Photorhabdus luminescens subsp. laumondii).